We begin with the raw amino-acid sequence, 211 residues long: CASP-like protein 1B1 (211 aa).

Residues 1 to 29 (MDLERGSKTPPSSAPAAAAATTTTSTCCS) form a disordered region. The Cytoplasmic portion of the chain corresponds to 1–55 (MDLERGSKTPPSSAPAAAAATTTTSTCCSNKRPQLRDRLVALQPVVLRAAATLAT). The span at 9–26 (TPPSSAPAAAAATTTTST) shows a compositional bias: low complexity. Residues 56 to 76 (AVAAAVMALNAQSYTAVVAIV) form a helical membrane-spanning segment. Residues 77-94 (GTRPLTQTFTTKFRDTPA) are Extracellular-facing. The helical transmembrane segment at 95 to 115 (FVYFVIANAIAAVYNLVMLLF) threads the bilayer. Residues 116 to 123 (RCLILRRR) are Cytoplasmic-facing. A helical transmembrane segment spans residues 124–144 (MAGLVVHMLDMVIMALLATGA). Over 145–176 (ATAAAMAELGKNGNVHARWNPICDRFGSFCSR) the chain is Extracellular. The helical transmembrane segment at 177–197 (GGVALASSFTGVALMLALNLL) threads the bilayer. The Cytoplasmic segment spans residues 198 to 211 (SAASNAQCSPGQYE).

It belongs to the Casparian strip membrane proteins (CASP) family. Homodimer and heterodimers.

It is found in the cell membrane. This chain is CASP-like protein 1B1, found in Sorghum bicolor (Sorghum).